The primary structure comprises 391 residues: 3-ketoacyl-CoA thiolase (391 aa).

Residue C95 is the Acyl-thioester intermediate of the active site. Active-site proton acceptor residues include H347 and C377.

The protein belongs to the thiolase-like superfamily. Thiolase family. Heterotetramer of two alpha chains (FadB) and two beta chains (FadA).

The protein localises to the cytoplasm. It carries out the reaction an acyl-CoA + acetyl-CoA = a 3-oxoacyl-CoA + CoA. It functions in the pathway lipid metabolism; fatty acid beta-oxidation. Catalyzes the final step of fatty acid oxidation in which acetyl-CoA is released and the CoA ester of a fatty acid two carbons shorter is formed. The chain is 3-ketoacyl-CoA thiolase from Pseudomonas syringae pv. syringae (strain B728a).